A 481-amino-acid chain; its full sequence is Abl interactor 1 (481 aa).

A2 is subject to N-acetylalanine. The tract at residues 18 to 79 (ALIESYQNLT…NNVLQLLDIQ (62 aa)) is required for binding to WASF1. Residues 45–107 (KALEETKAYT…DIHKEKVARR (63 aa)) enclose the t-SNARE coiled-coil homology domain. Y53 carries the phosphotyrosine modification. The tract at residues 158 to 285 (AKHGNNQPAR…PGAAPGSQYG (128 aa)) is disordered. The span at 161–175 (GNNQPARTGTLSRTN) shows a compositional bias: polar residues. T174 and T178 each carry phosphothreonine. Phosphoserine occurs at positions 183 and 187. Y213 carries the phosphotyrosine modification. T215 is subject to Phosphothreonine. Phosphoserine is present on residues S216, S222, and S225. A compositionally biased stretch (polar residues) spans 222–235 (SQHSPGRTASLNQR). Low complexity-rich tracts occupy residues 248–258 (SRENSGSSSIG) and 272–282 (GPAAPGAAPGS). S292 and S296 each carry phosphoserine. Disordered regions lie at residues 318–348 (AQPHVNGGPLYSQNSISVAPPPPPMPQLTPQ) and 361–392 (NIADSPTPPPPPPPDDIPMFDDSPPPPPPPPV). Composition is skewed to pro residues over residues 366-376 (PTPPPPPPPDD) and 383-392 (SPPPPPPPPV). One can recognise an SH3 domain in the interval 419–478 (NYIEKVVAIYDYTKDKDDELSFKEGAIIYVIKKNDDGWFEGVCNRVTGLFPGNYVESIMH). Y428 is subject to Phosphotyrosine. The residue at position 439 (S439) is a Phosphoserine. Residue T480 is modified to Phosphothreonine.

This sequence belongs to the ABI family. In terms of assembly, interacts with ENAH, Abelson murine leukemia virus V-ABL, ABL1, STX1A, SNAP25, VAMP2, and through its N-terminus with WASF1. Part of a complex consisting of ABI1, STX1A and SNAP25. Part of a complex consisting of ABI1, EPS8 and SOS1. Interacts with EPS8, SOS1, SOS2, GRB2, SPTA1, and the first SH3 domain of NCK1. Component of the WAVE2 complex composed of ABI1, CYFIP1/SRA1, NCKAP1/NAP1 (NCKAP1l/HEM1 in hematopoietic cells) and WASF2/WAVE2. Interacts (via SH3 domain) with SHANK2 and SHANK3, but not SHANK1; the interaction is direct. Interacts with the heterodimer MYC:MAX; the interaction may enhance MYC:MAX transcriptional activity. Interacts with FNBP1L (via the SH3 domain), WASF2, and CDC42, but only in the presence of FNBP1L. Phosphorylated on tyrosine residues after serum stimulation or induction by v-Abl. Seems to be phosphorylated at Tyr-53 by ABL1, required for nuclear but not for synaptic localization. Widely expressed with highest levels in bone marrow, spleen, brain, testes, and embryonic brain. In adult brain prominently expressed in the neocortex, hippocampus and dentate gyrus.

Its subcellular location is the cytoplasm. It is found in the nucleus. It localises to the cell projection. The protein localises to the lamellipodium. The protein resides in the filopodium. Its subcellular location is the growth cone. It is found in the postsynaptic density. It localises to the cytoskeleton. May act in negative regulation of cell growth and transformation by interacting with nonreceptor tyrosine kinases ABL1 and/or ABL2. In vitro, at least isoform 2 and isoform 4 suppress the transforming activity of Abelson murine leukemia virus (v-Abl) after overexpression in fibroblasts. May play a role in regulation EGF-induced Erk pathway activation. Involved in cytoskeletal reorganization and EGFR signaling. Together with EPS8 participates in transduction of signals from Ras to Rac. In vitro, a trimeric complex of ABI1, EPS8 and SOS1 exhibits Rac specific guanine nucleotide exchange factor (GEF) activity and ABI1 seems to act as an adapter in the complex. Regulates ABL1/c-Abl-mediated phosphorylation of ENAH. Recruits WASF1 to lamellipodia and there seems to regulate WASF1 protein level. In brain, seems to regulate the dendritic outgrowth and branching as well as to determine the shape and number of synaptic contacts of developing neurons. This Mus musculus (Mouse) protein is Abl interactor 1.